Consider the following 64-residue polypeptide: Large ribosomal subunit protein bL33 (64 aa).

It belongs to the bacterial ribosomal protein bL33 family.

In Prochlorococcus marinus (strain MIT 9313), this protein is Large ribosomal subunit protein bL33.